Consider the following 384-residue polypeptide: uncharacterized protein (384 aa).

Transmembrane regions (helical) follow at residues 22 to 42, 52 to 72, 81 to 101, 106 to 126, 143 to 163, 164 to 184, 202 to 222, 240 to 260, 276 to 296, 299 to 319, 327 to 347, and 352 to 372; these read LAFF…PFAK, LGLL…LTGV, AVIL…VLMN, MAIA…AMNI, FHGL…ALLW, LGLN…ILLL, LFVF…VMFL, GMSP…MTLG, VLLG…SIDS, AAII…PILF, VMPA…GILA, and IGFI…ALLL.

Belongs to the major facilitator superfamily.

It localises to the membrane. This is an uncharacterized protein from Yersinia pestis.